The primary structure comprises 383 residues: BRISC and BRCA1-A complex member 2 (383 aa).

The residue at position 1 (Met-1) is an N-acetylmethionine. Phosphoserine is present on Ser-2. 2 UEV-like regions span residues 30 to 147 (DATN…TLLE) and 275 to 364 (IAAF…RAKA).

The protein belongs to the BABAM2 family. In terms of assembly, component of the ARISC complex, at least composed of UIMC1/RAP80, ABRAXAS1, BRCC3/BRCC36, BABAM2 and BABAM1/NBA1. Component of the BRCA1-A complex, at least composed of BRCA1, BARD1, UIMC1/RAP80, ABRAXAS1, BRCC3/BRCC36, BABAM2 and BABAM1/NBA1. In the BRCA1-A complex, interacts directly with ABRAXAS1, BRCC3/BRCC36 and BABAM1/NBA1. Binds polyubiquitin. Component of the BRISC complex, at least composed of ABRAXAS2, BRCC3/BRCC36, BABAM2 and BABAM1/NBA1. Identified in a complex with SHMT2 and the other subunits of the BRISC complex. Component of the BRCA1/BRCA2 containing complex (BRCC), which also contains BRCA1, BRCA2, BARD1, BRCC3/BRCC36 and RAD51. BRCC is a ubiquitin E3 ligase complex that enhances cellular survival following DNA damage. May interact with FAS and TNFRSF1A.

It localises to the cytoplasm. The protein resides in the nucleus. Functionally, component of the BRCA1-A complex, a complex that specifically recognizes 'Lys-63'-linked ubiquitinated histones H2A and H2AX at DNA lesions sites, leading to target the BRCA1-BARD1 heterodimer to sites of DNA damage at double-strand breaks (DSBs). The BRCA1-A complex also possesses deubiquitinase activity that specifically removes 'Lys-63'-linked ubiquitin on histones H2A and H2AX. In the BRCA1-A complex, it acts as an adapter that bridges the interaction between BABAM1/NBA1 and the rest of the complex, thereby being required for the complex integrity and modulating the E3 ubiquitin ligase activity of the BRCA1-BARD1 heterodimer. Component of the BRISC complex, a multiprotein complex that specifically cleaves 'Lys-63'-linked ubiquitin in various substrates. Within the BRISC complex, acts as an adapter that bridges the interaction between BABAM1/NBA1 and the rest of the complex, thereby being required for the complex integrity. The BRISC complex is required for normal mitotic spindle assembly and microtubule attachment to kinetochores via its role in deubiquitinating NUMA1. The BRISC complex plays a role in interferon signaling via its role in the deubiquitination of the interferon receptor IFNAR1; deubiquitination increases IFNAR1 activity by enhancing its stability and cell surface expression. Down-regulates the response to bacterial lipopolysaccharide (LPS) via its role in IFNAR1 deubiquitination. May play a role in homeostasis or cellular differentiation in cells of neural, epithelial and germline origins. May also act as a death receptor-associated anti-apoptotic protein, which inhibits the mitochondrial apoptotic pathway. May regulate TNF-alpha signaling through its interactions with TNFRSF1A; however these effects may be indirect. This chain is BRISC and BRCA1-A complex member 2 (BABAM2), found in Bos taurus (Bovine).